A 392-amino-acid chain; its full sequence is Tryptophan synthase beta chain (392 aa).

N6-(pyridoxal phosphate)lysine is present on Lys-86.

The protein belongs to the TrpB family. As to quaternary structure, tetramer of two alpha and two beta chains. Pyridoxal 5'-phosphate serves as cofactor.

The enzyme catalyses (1S,2R)-1-C-(indol-3-yl)glycerol 3-phosphate + L-serine = D-glyceraldehyde 3-phosphate + L-tryptophan + H2O. It participates in amino-acid biosynthesis; L-tryptophan biosynthesis; L-tryptophan from chorismate: step 5/5. The beta subunit is responsible for the synthesis of L-tryptophan from indole and L-serine. This chain is Tryptophan synthase beta chain (trpB), found in Buchnera aphidicola subsp. Schlechtendalia chinensis.